The chain runs to 137 residues: Nuclear transition protein 2 (137 aa).

Polar residues predominate over residues Met-1–Pro-21. The interval Met-1–Asn-137 is disordered. Zn(2+)-binding residues include His-12, His-16, His-24, Cys-29, Cys-31, Cys-35, and Cys-38. Over residues Gln-22 to Pro-74 the composition is skewed to low complexity. The segment covering Pro-78–Pro-91 has biased composition (basic residues). Positions Gly-110–Ile-118 match the Nuclear localization signal motif. The segment covering Lys-126–Asn-137 has biased composition (basic residues). At Ser-132 the chain carries Phosphoserine.

Belongs to the nuclear transition protein 2 family. Testis. Expression is restricted to haploid germ cells.

It localises to the nucleus. The protein localises to the nucleolus. It is found in the chromosome. Functionally, plays a key role in the replacement of histones to protamine in the elongating spermatids of mammals. In condensing spermatids, loaded onto the nucleosomes, where it promotes the recruitment and processing of protamines, which are responsible for histone eviction. In Sus scrofa (Pig), this protein is Nuclear transition protein 2 (TNP2).